A 305-amino-acid polypeptide reads, in one-letter code: Transmembrane epididymal protein 1 (305 aa).

Residues Phe4–Ile24 traverse the membrane as a helical segment. Residue Asn32 is glycosylated (N-linked (GlcNAc...) asparagine). The next 6 helical transmembrane spans lie at Leu51 to Tyr71, Leu100 to Leu120, Leu124 to Val144, Ser159 to Pro179, Ile187 to Phe207, and Ile223 to Gly243. The segment at Glu285–Ala305 is disordered.

The protein belongs to the TMEM45 family.

The protein resides in the membrane. The sequence is that of Transmembrane epididymal protein 1 (Teddm1) from Rattus norvegicus (Rat).